Reading from the N-terminus, the 180-residue chain is Endoribonuclease YbeY (180 aa).

The Zn(2+) site is built by histidine 136, histidine 140, and histidine 146.

The protein belongs to the endoribonuclease YbeY family. The cofactor is Zn(2+).

The protein localises to the cytoplasm. In terms of biological role, single strand-specific metallo-endoribonuclease involved in late-stage 70S ribosome quality control and in maturation of the 3' terminus of the 16S rRNA. In Synechococcus sp. (strain CC9902), this protein is Endoribonuclease YbeY.